Consider the following 379-residue polypeptide: tRNA-specific 2-thiouridylase MnmA (379 aa).

Residues 23 to 30 (AMSGGVDS) and L49 contribute to the ATP site. The active-site Nucleophile is the C117. A disulfide bridge connects residues C117 and C214. ATP is bound at residue G141. An interaction with tRNA region spans residues 163 to 165 (RDQ). Residue C214 is the Cysteine persulfide intermediate of the active site.

The protein belongs to the MnmA/TRMU family.

It is found in the cytoplasm. The catalysed reaction is S-sulfanyl-L-cysteinyl-[protein] + uridine(34) in tRNA + AH2 + ATP = 2-thiouridine(34) in tRNA + L-cysteinyl-[protein] + A + AMP + diphosphate + H(+). Catalyzes the 2-thiolation of uridine at the wobble position (U34) of tRNA, leading to the formation of s(2)U34. In Cereibacter sphaeroides (strain ATCC 17023 / DSM 158 / JCM 6121 / CCUG 31486 / LMG 2827 / NBRC 12203 / NCIMB 8253 / ATH 2.4.1.) (Rhodobacter sphaeroides), this protein is tRNA-specific 2-thiouridylase MnmA.